The sequence spans 317 residues: Signal recognition particle receptor FtsY (317 aa).

GTP-binding positions include 117-124 (GVNGVGKT), 199-203 (DTAGR), and 263-266 (TKLD).

This sequence belongs to the GTP-binding SRP family. FtsY subfamily. Part of the signal recognition particle protein translocation system, which is composed of SRP and FtsY.

It localises to the cell membrane. The protein resides in the cytoplasm. It catalyses the reaction GTP + H2O = GDP + phosphate + H(+). Functionally, involved in targeting and insertion of nascent membrane proteins into the cytoplasmic membrane. Acts as a receptor for the complex formed by the signal recognition particle (SRP) and the ribosome-nascent chain (RNC). This is Signal recognition particle receptor FtsY from Deinococcus radiodurans (strain ATCC 13939 / DSM 20539 / JCM 16871 / CCUG 27074 / LMG 4051 / NBRC 15346 / NCIMB 9279 / VKM B-1422 / R1).